The following is a 389-amino-acid chain: Putative nickel insertion protein (389 aa).

It belongs to the LarC family.

In Desulfotalea psychrophila (strain LSv54 / DSM 12343), this protein is Putative nickel insertion protein.